The primary structure comprises 413 residues: Probable N-acetyltransferase HLS1-like (413 aa).

One can recognise an N-acetyltransferase domain in the interval 5–187 (VEVREYDPSK…VNPVYAHRVN (183 aa)).

This sequence belongs to the acetyltransferase family.

This is Probable N-acetyltransferase HLS1-like from Arabidopsis thaliana (Mouse-ear cress).